The chain runs to 350 residues: Anthranilate phosphoribosyltransferase (350 aa).

5-phospho-alpha-D-ribose 1-diphosphate-binding positions include glycine 82, 85-86 (GD), serine 90, 92-95 (NVST), 110-118 (KHGNRAVTG), and glycine 122. Position 82 (glycine 82) interacts with anthranilate. Residue serine 94 participates in Mg(2+) binding. Residue asparagine 113 participates in anthranilate binding. Anthranilate is bound at residue arginine 168. Aspartate 232 and glutamate 233 together coordinate Mg(2+).

The protein belongs to the anthranilate phosphoribosyltransferase family. Homodimer. Mg(2+) is required as a cofactor.

The enzyme catalyses N-(5-phospho-beta-D-ribosyl)anthranilate + diphosphate = 5-phospho-alpha-D-ribose 1-diphosphate + anthranilate. It functions in the pathway amino-acid biosynthesis; L-tryptophan biosynthesis; L-tryptophan from chorismate: step 2/5. In terms of biological role, catalyzes the transfer of the phosphoribosyl group of 5-phosphorylribose-1-pyrophosphate (PRPP) to anthranilate to yield N-(5'-phosphoribosyl)-anthranilate (PRA). This is Anthranilate phosphoribosyltransferase from Methanothermobacter marburgensis (strain ATCC BAA-927 / DSM 2133 / JCM 14651 / NBRC 100331 / OCM 82 / Marburg) (Methanobacterium thermoautotrophicum).